Reading from the N-terminus, the 85-residue chain is Translation initiation factor IF-1 (85 aa).

The 72-residue stretch at 1 to 72 (MAKEELIEMH…SKGRITFRHI (72 aa)) folds into the S1-like domain.

This sequence belongs to the IF-1 family. In terms of assembly, component of the 30S ribosomal translation pre-initiation complex which assembles on the 30S ribosome in the order IF-2 and IF-3, IF-1 and N-formylmethionyl-tRNA(fMet); mRNA recruitment can occur at any time during PIC assembly.

The protein resides in the cytoplasm. Functionally, one of the essential components for the initiation of protein synthesis. Stabilizes the binding of IF-2 and IF-3 on the 30S subunit to which N-formylmethionyl-tRNA(fMet) subsequently binds. Helps modulate mRNA selection, yielding the 30S pre-initiation complex (PIC). Upon addition of the 50S ribosomal subunit IF-1, IF-2 and IF-3 are released leaving the mature 70S translation initiation complex. The protein is Translation initiation factor IF-1 of Polaromonas naphthalenivorans (strain CJ2).